The sequence spans 101 residues: Small ribosomal subunit protein uS14 (101 aa).

The protein belongs to the universal ribosomal protein uS14 family. Part of the 30S ribosomal subunit. Contacts proteins S3 and S10.

Its function is as follows. Binds 16S rRNA, required for the assembly of 30S particles and may also be responsible for determining the conformation of the 16S rRNA at the A site. The protein is Small ribosomal subunit protein uS14 of Polynucleobacter necessarius subsp. necessarius (strain STIR1).